The primary structure comprises 209 residues: Large ribosomal subunit protein uL3 (209 aa).

Gln-150 is modified (N5-methylglutamine).

Belongs to the universal ribosomal protein uL3 family. Part of the 50S ribosomal subunit. Forms a cluster with proteins L14 and L19. Post-translationally, methylated by PrmB.

Its function is as follows. One of the primary rRNA binding proteins, it binds directly near the 3'-end of the 23S rRNA, where it nucleates assembly of the 50S subunit. In Aliivibrio fischeri (strain MJ11) (Vibrio fischeri), this protein is Large ribosomal subunit protein uL3.